The chain runs to 143 residues: Small ribosomal subunit protein eS19y (143 aa).

The protein belongs to the eukaryotic ribosomal protein eS19 family.

The polypeptide is Small ribosomal subunit protein eS19y (RPS19B) (Arabidopsis thaliana (Mouse-ear cress)).